Here is a 709-residue protein sequence, read N- to C-terminus: MSNKEEHVDETSASGVKEVSSIAARHDNGYAPSLITSTSGMDSFQSHALLNDPTLIEDYSDIINNRPTSGSKLTLGNEDSESMGGSVVVTPTSNKSSPFNSKLNILSNAAEKGHDVLRNRDDDKELEEENVEKHMHSNSKRDQRHYKENSSELPDSYDYSDSEFEDNLERRLQEIETDSVDSADKDEVHFSVNNTMNPDVDDFSDGLKYAISEDEDEEENYSDDDDFDRKFQDSGFQGEKDDLEEENDDYQPLSPPRELDPDKLYALYAFNGHDSSHCQLGQDEPCILLNDQDAYWWLVKRITDGKIGFAPAEILETFPERLARLNCWKNENMSSQSVASSDSKDDSISSGNKNQSDAESIIPTPALNGYGKGNKSVSFNDVVGYADRFIDDAIEDTSLDSNDDGGEGNGQSYDDDVDNDKETKVTHRDEYTEAKLNFGKFQDDDTSDVVSDVSFSTSLNTPLNVKKVRRQDNKNESEPKTSSSKDREDDYNANRYVGQEKSEPVDSDYDTDLKKVFEAPRMPFANGMAKSDSQNSLSTIGEFSPSSSEWTNESPSTPIVEESSSIPSSRAIKDISQYIHAKSKIEETTNVENTEGQIQASLGSSGGMANQTDAEQPKEELEKHHSTPEEEKQSTLSLHSSSEEDFYMDEQRAVSSASINSSLSGSRALSNTNMSDPASKPNSLVQHLYAPVFDRMDVLMKQLDEIIRK.

Serine 2 carries the post-translational modification N-acetylserine. Residues 61–258 are disordered; the sequence is DIINNRPTSG…DYQPLSPPRE (198 aa). Composition is skewed to polar residues over residues 62-74 and 89-107; these read IINN…SKLT and VTPT…NILS. 2 stretches are compositionally biased toward basic and acidic residues: residues 111 to 123 and 131 to 150; these read EKGH…RDDD and VEKH…KENS. Residue tyrosine 159 is modified to Phosphotyrosine. Phosphoserine is present on residues serine 160 and serine 162. Threonine 177 is modified (phosphothreonine). 2 positions are modified to phosphoserine: serine 212 and serine 222. The span at 212 to 226 shows a compositional bias: acidic residues; it reads SEDEDEEENYSDDDD. One can recognise an SH3 domain in the interval 259 to 320; the sequence is LDPDKLYALY…PAEILETFPE (62 aa). The tract at residues 334–367 is disordered; the sequence is SSQSVASSDSKDDSISSGNKNQSDAESIIPTPAL. Serine 376, serine 378, and serine 401 each carry phosphoserine. The segment covering 396 to 406 has biased composition (acidic residues); that stretch reads DTSLDSNDDGG. 4 disordered regions span residues 396–421, 464–510, 525–571, and 600–680; these read DTSL…DNDK, NVKK…SDYD, ANGM…SSRA, and ASLG…PASK. Residues 470–504 are compositionally biased toward basic and acidic residues; the sequence is RQDNKNESEPKTSSSKDREDDYNANRYVGQEKSEP. The residue at position 507 (serine 507) is a Phosphoserine. Polar residues predominate over residues 531–552; that stretch reads SDSQNSLSTIGEFSPSSSEWTN. Residues 553–569 are compositionally biased toward low complexity; sequence ESPSTPIVEESSSIPSS. Positions 600 to 614 are enriched in polar residues; sequence ASLGSSGGMANQTDA. Positions 615 to 633 are enriched in basic and acidic residues; the sequence is EQPKEELEKHHSTPEEEKQ. Serine 655, serine 658, and serine 670 each carry phosphoserine. Positions 655-671 are enriched in low complexity; it reads SSASINSSLSGSRALSN.

Interacts with GLC7.

Important for bud site selection. Seems to be a regulatory subunit of the BUD14-GLC7 type-I phosphatase complex. The BUD14-GLC7 complex is necessary to regulate microtubule dynamics at the cortex and may function as a specific activator of the dynein complex. The polypeptide is Bud site selection protein 14 (BUD14) (Saccharomyces cerevisiae (strain ATCC 204508 / S288c) (Baker's yeast)).